A 518-amino-acid chain; its full sequence is Membrane-bound glycerophospholipid O-acyltransferase 2 (518 aa).

The next 6 membrane-spanning stretches (helical) occupy residues 21–41 (PVDQ…AIWF), 60–80 (TLLG…HFVI), 87–107 (YLMI…FALG), 183–203 (FMGI…FIEG), 230–250 (IAVA…MTIT), and 267–283 (ASWP…LMAA). Residues Asn-341 and His-372 contribute to the active site. 3 helical membrane passes run 365-385 (FILS…FLTG), 415-435 (IITW…FVLL), and 443-463 (FYSS…LVFP).

This sequence belongs to the membrane-bound acyltransferase family.

The protein localises to the endoplasmic reticulum membrane. The catalysed reaction is a 1-acyl-sn-glycero-3-phosphocholine + an acyl-CoA = a 1,2-diacyl-sn-glycero-3-phosphocholine + CoA. It carries out the reaction a 1-acyl-sn-glycero-3-phosphoethanolamine + an acyl-CoA = a 1,2-diacyl-sn-glycero-3-phosphoethanolamine + CoA. It catalyses the reaction a 1-acyl-sn-glycero-3-phosphate + an acyl-CoA = a 1,2-diacyl-sn-glycero-3-phosphate + CoA. The enzyme catalyses (9Z)-hexadecenoyl-CoA + 1-hexadecanoyl-sn-glycero-3-phosphocholine = 1-hexadecanoyl-2-(9Z-hexadecenoyl)-sn-glycero-3-phosphocholine + CoA. The catalysed reaction is 1-hexadecanoyl-sn-glycero-3-phosphoethanolamine + (9Z)-octadecenoyl-CoA = 1-hexadecanoyl-2-(9Z-octadecenoyl)-sn-glycero-3-phosphoethanolamine + CoA. It carries out the reaction 1-hexadecanoyl-sn-glycero-3-phosphoethanolamine + (9Z)-hexadecenoyl-CoA = 1-hexadecanoyl-2-(9Z)-hexadecenoyl-sn-glycero-3-phosphoethanolamine + CoA. It catalyses the reaction 1-(9Z-octadecenoyl)-sn-glycero-3-phospho-L-serine + hexadecanoyl-CoA = 1-(9Z)-octadecenoyl-2-hexadecanoyl-sn-glycero-3-phosphoserine + CoA. The enzyme catalyses (9Z,12Z)-octadecadienoyl-CoA + 1-hexadecanoyl-sn-glycero-3-phosphocholine = 1-hexadecanoyl-2-(9Z,12Z-octadecadienoyl)-sn-glycero-3-phosphocholine + CoA. The catalysed reaction is 1-hexadecanoyl-sn-glycero-3-phosphocholine + (9Z)-octadecenoyl-CoA = 1-hexadecanoyl-2-(9Z-octadecenoyl)-sn-glycero-3-phosphocholine + CoA. It carries out the reaction 1-hexadecanoyl-sn-glycero-3-phosphate + (9Z)-hexadecenoyl-CoA = 1-hexadecanoyl-2-[(9Z)-hexadec-9-enoyl]-sn-glycero-3-phosphate + CoA. It catalyses the reaction 1-hexadecanoyl-sn-glycero-3-phosphate + (9Z)-octadecenoyl-CoA = 1-hexadecanoyl-2-(9Z-octadecenoyl)-sn-glycero-3-phosphate + CoA. The enzyme catalyses a 1-O-(1Z-alkenyl)-sn-glycero-3-phosphocholine + (9Z)-octadecenoyl-CoA = 1-O-(1Z)-alkenyl-2-(9Z)-octadecenoyl-sn-glycero-3-phosphocholine + CoA. The catalysed reaction is a 1-O-(1Z-alkenyl)-sn-glycero-3-phosphoethanolamine + (9Z)-octadecenoyl-CoA = 1-O-(1Z)-alkenyl-2-(9Z)-octadecenoyl-sn-glycero-3-phosphoethanolamine + CoA. It carries out the reaction 1-octadecanoyl-sn-glycero-3-phosphoethanolamine + (9Z)-octadecenoyl-CoA = 1-octadecanoyl-2-(9Z-octadecenoyl)-sn-glycero-3-phosphoethanolamine + CoA. It catalyses the reaction 1-octadecanoyl-sn-glycero-3-phosphocholine + (9Z)-octadecenoyl-CoA = 1-octadecanoyl-2-(9Z-octadecenoyl)-sn-glycero-3-phosphocholine + CoA. The enzyme catalyses 1-(9Z-octadecenoyl)-sn-glycero-3-phosphoethanolamine + (9Z)-octadecenoyl-CoA = 1,2-di-(9Z-octadecenoyl)-sn-glycero-3-phosphoethanolamine + CoA. Its pathway is lipid metabolism; phospholipid metabolism. Functionally, acyltransferase which catalyzes the transfer of an acyl group from an acyl-CoA to a lysophospholipid leading to the production of a phospholipid and participates in the reacylation step of the phospholipid remodeling pathway also known as the Lands cycle. May catalyze preferentially the acylation of lysophosphatidylethanolamine (1-acyl-sn-glycero-3-phosphoethanolamine or LPE) and lysophosphatidic acid (LPA) and to a lesser extend lysophosphatidylcholine (LPC) and lysophosphatidylserine (LPS). Prefers oleoyl-CoA as the acyl donor. This chain is Membrane-bound glycerophospholipid O-acyltransferase 2, found in Gallus gallus (Chicken).